Here is a 311-residue protein sequence, read N- to C-terminus: Putative tenascin-XA (311 aa).

2 disordered regions span residues 1-47 (MEDK…EPRL) and 124-150 (LSAEGTTGLAPAGQTSEESRPRLSQLS). Fibronectin type-III domains follow at residues 41–135 (PPEE…LAPA), 145–249 (RLSQ…SPRD), and 250–311 (LQFS…SCVH).

In terms of tissue distribution, expressed in the adrenal gland.

The protein is Putative tenascin-XA (TNXA) of Homo sapiens (Human).